A 130-amino-acid polypeptide reads, in one-letter code: Small ribosomal subunit protein uS9 (130 aa).

The tract at residues 109–130 is disordered; it reads RMKERKKYGLKGARRAPQFSKR. Positions 111–130 are enriched in basic residues; sequence KERKKYGLKGARRAPQFSKR.

This sequence belongs to the universal ribosomal protein uS9 family.

This chain is Small ribosomal subunit protein uS9, found in Listeria innocua serovar 6a (strain ATCC BAA-680 / CLIP 11262).